Consider the following 809-residue polypeptide: Protein TOC75, chloroplastic (809 aa).

Positions 1–17 are enriched in polar residues; it reads MRTSVIPNRLTPTLTTH. A chloroplast-targeting transit peptide spans 1-35; sequence MRTSVIPNRLTPTLTTHPSRRRNDHITTRTSSLKC. A disordered region spans residues 1 to 44; the sequence is MRTSVIPNRLTPTLTTHPSRRRNDHITTRTSSLKCHLSPSSGDN. A chloroplast; outer membrane-targeting transit peptide spans 36-131; sequence HLSPSSGDNN…RILSPARAIA (96 aa). Topologically, residues 132–143 are chloroplast intermembrane; the sequence is DEPKSEDWDSHE. A beta stranded membrane pass occupies residues 144–152; it reads LPADITVLL. At 153 to 160 the chain is on the cytoplasmic side; sequence GRLSGFKK. A beta stranded membrane pass occupies residues 161-169; the sequence is YKISDILFF. The Chloroplast intermembrane segment spans residues 170–225; it reads DRNKKSKVETQDSFLDMVSLKPGGVYTKAQLQKELESLATCGMFEKVDMEGKTNAD. A beta stranded membrane pass occupies residues 226–234; it reads GSLGLTISF. The Cytoplasmic segment spans residues 235–247; the sequence is AESMWERADRFRC. A beta stranded membrane pass occupies residues 248 to 254; the sequence is INVGLMG. The Chloroplast intermembrane portion of the chain corresponds to 255 to 357; that stretch reads QSKPVEMDPD…VVCEVVEGDI (103 aa). A beta stranded transmembrane segment spans residues 358 to 365; sequence TKLSIQYL. Over 366 to 410 the chain is Cytoplasmic; it reads DKLGNVVEGNTEGPVVQRELPKQLLPGHTFNIEAGKQALRNINSL. A beta stranded membrane pass occupies residues 411 to 418; the sequence is ALFSNIEV. Over 419-427 the chain is Chloroplast intermembrane; that stretch reads NPRPDEMNE. Residues 428–436 form a beta stranded membrane-spanning segment; sequence GSIIVEIKL. Residues 437–442 are Cytoplasmic-facing; sequence KELEQK. A beta stranded transmembrane segment spans residues 443 to 452; sequence SAEVSTEWSI. The Chloroplast intermembrane segment spans residues 453–464; that stretch reads VPGRGGRPTLAS. Residues 465–473 traverse the membrane as a beta stranded segment; sequence LQPGGTITF. Residues 474-500 are Cytoplasmic-facing; it reads EHRNLQGLNRSLTGSVTTSNFLNPQDD. A beta stranded transmembrane segment spans residues 501–509; the sequence is LAFKMEYAH. Residues 510-553 are Chloroplast intermembrane-facing; that stretch reads PYLDGVDNPRNRTLRVSCFNSRKLSPVFTGGPGVDEVPSIWVDR. The beta stranded transmembrane segment at 554-561 threads the bilayer; the sequence is AGVKANIT. Residues 562–569 are Cytoplasmic-facing; sequence ENFSRQSK. A beta stranded transmembrane segment spans residues 570–577; the sequence is FTYGLVME. Residues 578–684 lie on the Chloroplast intermembrane side of the membrane; that stretch reads EIITRDESNH…VEEGAGKSPP (107 aa). The beta stranded transmembrane segment at 685–693 threads the bilayer; sequence PVLVLHGHY. Over 694–705 the chain is Cytoplasmic; sequence GGCVGDLPSYDA. Residues 706 to 714 form a beta stranded membrane-spanning segment; sequence FTLGGPYSV. The Chloroplast intermembrane portion of the chain corresponds to 715 to 776; sequence RGYNMGEIGA…VYRRMGQGSS (62 aa). Residues 777–783 traverse the membrane as a beta stranded segment; sequence YGAGMKL. The Cytoplasmic segment spans residues 784–797; the sequence is GLVRAEYAVDHNSG. A beta stranded membrane pass occupies residues 798–805; sequence TGAVFFRF. Residues 806–809 lie on the Chloroplast intermembrane side of the membrane; sequence GERF.

It belongs to the TOC75 family. Part of the TOC core complex that includes a protein for the specific recognition of transit peptides surrounded by a ring composed of four proteins forming translocation channels, and four to five GTP-binding proteins providing energy. This core complex can interact with components of the TIC complex to form a larger import complex. Chloroplastic protein precursors such as prSS (precursor of the RuBisCO small subunit) also interact with these complexes. TOC75 interacts with OEP14, TOC34/OEP34, TOC86/OEP86, TIC55, TIC110/IEP110 and CLPC. Mostly expressed in young leaves, also present in old leaves, roots and stems (at protein level).

The protein localises to the plastid. It localises to the chloroplast outer membrane. Functionally, mediates the insertion of proteins targeted to the outer membrane of chloroplasts. Required for the import of protein precursors into chloroplasts. Forms the voltage-dependent preprotein translocation channels (hydrophilic beta barrel) of the TOC complex in the chloroplastic outer membrane. The narrowest inner diameter of this channel is approximately 14 Angstroms. This is Protein TOC75, chloroplastic (TOC75) from Pisum sativum (Garden pea).